Consider the following 238-residue polypeptide: Probable transcriptional regulatory protein CHU_3516 (238 aa).

This sequence belongs to the TACO1 family.

It is found in the cytoplasm. The polypeptide is Probable transcriptional regulatory protein CHU_3516 (Cytophaga hutchinsonii (strain ATCC 33406 / DSM 1761 / CIP 103989 / NBRC 15051 / NCIMB 9469 / D465)).